The primary structure comprises 997 residues: MKPITSSSKRRWNRFRREMCNYSKRLDTFQKKKWPRAKPTPETLATVGFYYNPISESNSEERLDNVTCYMCTKSFYDWEDDDDPLKEHITHSPSCPWAYILSSKNNPNQNPQAAALTKCREQTFVDKVWPYTNRPDYHCEPSVMAASGFVYNPTADAKDAAHCLYCDINLHDWEPDDDPYTEHKRRRADCVFFTWKDPNSLSPTKLSFLSTSNIDPEDLTEDNSILPVSPTRDSTKSHKTLNFSPSRKNNLNARPLTMSLYTNTSEEKDSQPTRAPQSPTKPVLLTAPRRKNKSPKKSKPAVFKPVKPIFSDEDEDDDDLTASQPFSKGICNDSMQVAKKNFTEEIPLKEDEKDNELEHLVSPATSVHTTVSDITGHQSVTDESDEQNNCMSTPPKIEIESKIEEEISVVSKSKEISSSVSSVGKEQNHTEKQVAIETPEQQKVEKEDEHLNLQGSFIEESTKQPISSKPSTSSPDMTDAATGGRVSSSSFRDKILQTNFSPRSTIDSFSNISKKRNSEEANDENDETNLKIPIPEKKRKFQEVLQSKNILVSSTEDSHEPVKVTEDSQTAIHVSKFEDLENKSMESEQSLQLLSESENDDKPLIDLIPLLAIKRKDNLVSGVLEKGKSTSTSKTKFDTSIVDFIEKPKTEISEVLPEEKRKAICDESQTVRVSIDRGVTKTRDVSSPVSDEKSENVNHEEANSGHTVMNVHSSLDPQPIVQPNELESGSYLKDLPDRNVGNSEKVTFQEDDINSPKLQSKNNQTVEAVNTETSDKLQEKEANHELENIEKIEEKLTEVDKVSLSDAFPDQEIKNSRTSVQNGTRSVSKNTPEKETKVDKIDNVSKKDVETSPGSCETSSAFAKTYAEKEVTSINLPSVRKPLDESYYDHSISPFDPLCQSSFLAPQTPVKSKHALPLVEANAPPWEPIDFSSLLESPVPNPVEPNKLSEKELDMTVEQWIKFMYAKCAKEFEEACEEKIEWLLEEGKRAEEYIQNL.

BIR repeat units lie at residues 25–99 and 120–194; these read RLDT…PWAY and REQT…VFFT. Residues Cys-163, Cys-166, His-183, and Cys-190 each coordinate Zn(2+). 5 disordered regions span residues 217 to 329, 370 to 527, 682 to 701, 755 to 782, and 817 to 838; these read EDLT…FSKG, TVSD…ENDE, TRDV…NHEE, SPKL…EKEA, and RTSV…ETKV. Polar residues predominate over residues 240-252; the sequence is TLNFSPSRKNNLN. The span at 288 to 299 shows a compositional bias: basic residues; it reads PRRKNKSPKKSK. The segment covering 311–320 has biased composition (acidic residues); sequence SDEDEDDDDL. Polar residues predominate over residues 370–392; that stretch reads TVSDITGHQSVTDESDEQNNCMS. Low complexity predominate over residues 408–423; sequence SVVSKSKEISSSVSSV. Residues 426–451 show a composition bias toward basic and acidic residues; it reads EQNHTEKQVAIETPEQQKVEKEDEHL. 2 stretches are compositionally biased toward polar residues: residues 463-476 and 485-512; these read KQPI…SSPD and RVSS…FSNI. Polar residues predominate over residues 756-772; sequence PKLQSKNNQTVEAVNTE. Residues 773-782 are compositionally biased toward basic and acidic residues; it reads TSDKLQEKEA. Residues 817-830 are compositionally biased toward polar residues; that stretch reads RTSVQNGTRSVSKN.

Component of the CPC complex at least composed of ark1, bir1 and pic1. Interacts with the mitotic checkpoint complex (MCC) subunit mad3. Phosphorylated by ark1.

It is found in the nucleus. It localises to the cytoplasm. The protein resides in the cytoskeleton. The protein localises to the spindle. Its subcellular location is the chromosome. It is found in the centromere. Functionally, component of the chromosomal passenger complex (CPC), a complex that acts as a key regulator of chromosome segregation and cytokinesis. Has a role in chromosome segregation by recruiting condensin and ark1 kinase to appropriate sites as the cell progresses through mitosis. Ark1 activity depends upon bir1 function and phosphorylation. Ark1 with bir1 function is required for full-scale association with kinetochores and formation of a complex with mad3. This is Chromosomal passenger complex protein bir1 (bir1) from Schizosaccharomyces pombe (strain 972 / ATCC 24843) (Fission yeast).